Consider the following 394-residue polypeptide: Na(+)/H(+) antiporter NhaA (394 aa).

A run of 11 helical transmembrane segments spans residues 14–34 (AGGI…NSVF), 59–79 (LLMW…GMEV), 95–115 (IFPA…YWFI), 125–145 (GWAI…ALLS), 155–175 (FLLA…ALFF), 177–197 (NELS…LITM), 204–224 (GIIH…KSGV), 258–278 (WCAF…SLAG), 292–312 (ITLG…YLAV), 328–348 (VFAI…IAGL), and 362–382 (LSRL…YILL).

It belongs to the NhaA Na(+)/H(+) (TC 2.A.33) antiporter family.

It localises to the cell inner membrane. It carries out the reaction Na(+)(in) + 2 H(+)(out) = Na(+)(out) + 2 H(+)(in). Functionally, na(+)/H(+) antiporter that extrudes sodium in exchange for external protons. The protein is Na(+)/H(+) antiporter NhaA of Haemophilus ducreyi (strain 35000HP / ATCC 700724).